The primary structure comprises 312 residues: Aspartoacylase (312 aa).

The Zn(2+) site is built by histidine 20 and glutamate 23. Arginine 62, asparagine 69, and arginine 70 together coordinate N-acetyl-L-aspartate. Residue histidine 115 coordinates Zn(2+). The N-acetyl-L-aspartate site is built by tyrosine 163 and arginine 167. Glutamate 177 serves as the catalytic Proton donor/acceptor. Residue tyrosine 287 participates in N-acetyl-L-aspartate binding.

It belongs to the AspA/AstE family. Aspartoacylase subfamily. Homodimer. It depends on Zn(2+) as a cofactor.

It is found in the cytoplasm. The protein resides in the nucleus. It carries out the reaction an N-acyl-L-aspartate + H2O = a carboxylate + L-aspartate. The catalysed reaction is N-acetyl-L-aspartate + H2O = L-aspartate + acetate. Functionally, catalyzes the deacetylation of N-acetylaspartic acid (NAA) to produce acetate and L-aspartate. NAA occurs in high concentration in brain and its hydrolysis NAA plays a significant part in the maintenance of intact white matter. In other tissues it acts as a scavenger of NAA from body fluids. In Mus musculus (Mouse), this protein is Aspartoacylase.